Reading from the N-terminus, the 673-residue chain is tRNA 5-methylaminomethyl-2-thiouridine biosynthesis bifunctional protein MnmC (673 aa).

A tRNA (mnm(5)s(2)U34)-methyltransferase region spans residues 1-245 (MSHAPIQTAA…KREMLIGELP (245 aa)). An FAD-dependent cmnm(5)s(2)U34 oxidoreductase region spans residues 272–673 (IGGGVASALT…VRKLLKGRAV (402 aa)).

The protein in the N-terminal section; belongs to the methyltransferase superfamily. tRNA (mnm(5)s(2)U34)-methyltransferase family. This sequence in the C-terminal section; belongs to the DAO family. The cofactor is FAD.

The protein resides in the cytoplasm. The enzyme catalyses 5-aminomethyl-2-thiouridine(34) in tRNA + S-adenosyl-L-methionine = 5-methylaminomethyl-2-thiouridine(34) in tRNA + S-adenosyl-L-homocysteine + H(+). In terms of biological role, catalyzes the last two steps in the biosynthesis of 5-methylaminomethyl-2-thiouridine (mnm(5)s(2)U) at the wobble position (U34) in tRNA. Catalyzes the FAD-dependent demodification of cmnm(5)s(2)U34 to nm(5)s(2)U34, followed by the transfer of a methyl group from S-adenosyl-L-methionine to nm(5)s(2)U34, to form mnm(5)s(2)U34. This chain is tRNA 5-methylaminomethyl-2-thiouridine biosynthesis bifunctional protein MnmC, found in Serratia proteamaculans (strain 568).